Here is a 360-residue protein sequence, read N- to C-terminus: Sphingolipid delta(4)-desaturase (360 aa).

Transmembrane regions (helical) follow at residues 67-87, 89-109, and 125-145; these read AVVLLQLSIAYALKNTPVLSF, FLALAYVVGATANQNCFLCIH, and LFAIWVNLPIGVPYSASFQPY. The Histidine box-1 signature appears at 109 to 113; it reads HELSH. The Histidine box-2 motif lies at 146–150; sequence HQLHH. 3 helical membrane passes run 170 to 190, 202 to 222, and 228 to 248; these read VLSSLLGKAFFATFQIFFYAL, FIHLLNVLVCLVSDFILIKFG, and WYLILSSFFAGSLHPTAGHFI. A Histidine box-3 motif is present at residues 288–292; it reads HNEHH.

The protein belongs to the fatty acid desaturase type 1 family. DEGS subfamily.

It is found in the membrane. It catalyses the reaction an N-acylsphinganine + 2 Fe(II)-[cytochrome b5] + O2 + 2 H(+) = an N-acylsphing-4-enine + 2 Fe(III)-[cytochrome b5] + 2 H2O. The protein operates within lipid metabolism; sphingolipid metabolism. Its function is as follows. Delta(4)-fatty-acid desaturase which introduces a double bond at the 4-position in the long-chain base (LCB) of ceramides. Required for the formation of the monounsaturated sphingoid base (E)-sphing-4-enine during glucosylceramide (GluCer) biosynthesis. The protein is Sphingolipid delta(4)-desaturase of Komagataella phaffii (strain GS115 / ATCC 20864) (Yeast).